The sequence spans 170 residues: ATP synthase subunit b (170 aa).

A helical membrane pass occupies residues I22–G41. The segment at L76 to R98 is disordered. The span at D89 to R98 shows a compositional bias: basic and acidic residues.

This sequence belongs to the ATPase B chain family. In terms of assembly, F-type ATPases have 2 components, F(1) - the catalytic core - and F(0) - the membrane proton channel. F(1) has five subunits: alpha(3), beta(3), gamma(1), delta(1), epsilon(1). F(0) has four main subunits: a(1), b(1), b'(1) and c(10-14). The alpha and beta chains form an alternating ring which encloses part of the gamma chain. F(1) is attached to F(0) by a central stalk formed by the gamma and epsilon chains, while a peripheral stalk is formed by the delta, b and b' chains.

It localises to the cellular thylakoid membrane. Functionally, f(1)F(0) ATP synthase produces ATP from ADP in the presence of a proton or sodium gradient. F-type ATPases consist of two structural domains, F(1) containing the extramembraneous catalytic core and F(0) containing the membrane proton channel, linked together by a central stalk and a peripheral stalk. During catalysis, ATP synthesis in the catalytic domain of F(1) is coupled via a rotary mechanism of the central stalk subunits to proton translocation. Its function is as follows. Component of the F(0) channel, it forms part of the peripheral stalk, linking F(1) to F(0). The protein is ATP synthase subunit b of Prochlorococcus marinus (strain AS9601).